An 80-amino-acid chain; its full sequence is Exodeoxyribonuclease 7 small subunit (80 aa).

This sequence belongs to the XseB family. In terms of assembly, heterooligomer composed of large and small subunits.

Its subcellular location is the cytoplasm. It carries out the reaction Exonucleolytic cleavage in either 5'- to 3'- or 3'- to 5'-direction to yield nucleoside 5'-phosphates.. Functionally, bidirectionally degrades single-stranded DNA into large acid-insoluble oligonucleotides, which are then degraded further into small acid-soluble oligonucleotides. In Aliivibrio salmonicida (strain LFI1238) (Vibrio salmonicida (strain LFI1238)), this protein is Exodeoxyribonuclease 7 small subunit.